Here is a 134-residue protein sequence, read N- to C-terminus: Profilin-2 (134 aa).

Cysteine 13 and cysteine 118 are oxidised to a cystine. Residues 84–100 (AVTRGKKGTGGITIKKT) carry the Involved in PIP2 interaction motif. Threonine 114 is modified (phosphothreonine).

Belongs to the profilin family. As to quaternary structure, occurs in many kinds of cells as a complex with monomeric actin in a 1:1 ratio. Phosphorylated by MAP kinases.

Its subcellular location is the cytoplasm. The protein resides in the cytoskeleton. Functionally, binds to actin and affects the structure of the cytoskeleton. At high concentrations, profilin prevents the polymerization of actin, whereas it enhances it at low concentrations. This is Profilin-2 from Olea europaea (Common olive).